The sequence spans 356 residues: tRNA N6-adenosine threonylcarbamoyltransferase (356 aa).

2 residues coordinate Fe cation: His115 and His119. Residues 139–143, Asp173, Gly186, Asp190, and Asn291 each bind substrate; that span reads LVSGG. Asp319 provides a ligand contact to Fe cation.

It belongs to the KAE1 / TsaD family. It depends on Fe(2+) as a cofactor.

It is found in the cytoplasm. It catalyses the reaction L-threonylcarbamoyladenylate + adenosine(37) in tRNA = N(6)-L-threonylcarbamoyladenosine(37) in tRNA + AMP + H(+). Functionally, required for the formation of a threonylcarbamoyl group on adenosine at position 37 (t(6)A37) in tRNAs that read codons beginning with adenine. Is involved in the transfer of the threonylcarbamoyl moiety of threonylcarbamoyl-AMP (TC-AMP) to the N6 group of A37, together with TsaE and TsaB. TsaD likely plays a direct catalytic role in this reaction. This is tRNA N6-adenosine threonylcarbamoyltransferase from Arthrobacter sp. (strain FB24).